An 870-amino-acid polypeptide reads, in one-letter code: Aminopeptidase N (870 aa).

Residues glutamate 121 and 261 to 265 contribute to the substrate site; that span reads GAMEN. Residue histidine 297 participates in Zn(2+) binding. Glutamate 298 (proton acceptor) is an active-site residue. Zn(2+) contacts are provided by histidine 301 and glutamate 320.

The protein belongs to the peptidase M1 family. Zn(2+) is required as a cofactor.

Its subcellular location is the cell inner membrane. It carries out the reaction Release of an N-terminal amino acid, Xaa-|-Yaa- from a peptide, amide or arylamide. Xaa is preferably Ala, but may be most amino acids including Pro (slow action). When a terminal hydrophobic residue is followed by a prolyl residue, the two may be released as an intact Xaa-Pro dipeptide.. Functionally, aminopeptidase N is involved in the degradation of intracellular peptides generated by protein breakdown during normal growth as well as in response to nutrient starvation. This chain is Aminopeptidase N (pepN), found in Escherichia coli (strain K12).